A 250-amino-acid polypeptide reads, in one-letter code: Probable transcriptional regulatory protein RER_29220 (250 aa).

The protein belongs to the TACO1 family.

It is found in the cytoplasm. The sequence is that of Probable transcriptional regulatory protein RER_29220 from Rhodococcus erythropolis (strain PR4 / NBRC 100887).